The following is a 192-amino-acid chain: Signal peptidase complex catalytic subunit SEC11C (192 aa).

Over 1–28 (MVRAGAVGTHLPTSSLDIFGDLRKMNKR) the chain is Cytoplasmic. The helical; Signal-anchor for type II membrane protein transmembrane segment at 29-48 (QLYYQVLNFAMIVSSALMIW) threads the bilayer. Topologically, residues 49-192 (KGLIVLTGSE…GAYVLLKRES (144 aa)) are lumenal. Residues Ser-68, His-108, and Asp-134 each act as charge relay system in the active site. The segment at 177–188 (ALVAVMGAYVLL) is C-terminal short (CTS) helix.

This sequence belongs to the peptidase S26B family. Component of the signal peptidase complex paralog C (SPC-C) composed of a catalytic subunit SEC11C and three accessory subunits SPCS1, SPCS2 and SPCS3. Within the complex, interacts with SPCS2 and SPCS3. The complex induces a local thinning of the ER membrane which is used to measure the length of the signal peptide (SP) h-region of protein substrates. This ensures the selectivity of the complex towards h-regions shorter than 18-20 amino acids. Post-translationally, may undergo processing at the N-terminus.

It localises to the endoplasmic reticulum membrane. It carries out the reaction Cleavage of hydrophobic, N-terminal signal or leader sequences from secreted and periplasmic proteins.. Catalytic component of the signal peptidase complex (SPC) which catalyzes the cleavage of N-terminal signal sequences from nascent proteins as they are translocated into the lumen of the endoplasmic reticulum. Specifically cleaves N-terminal signal peptides that contain a hydrophobic alpha-helix (h-region) shorter than 18-20 amino acids. The protein is Signal peptidase complex catalytic subunit SEC11C (Sec11c) of Rattus norvegicus (Rat).